Reading from the N-terminus, the 168-residue chain is N-alpha-acetyltransferase 50 (168 aa).

One can recognise an N-acetyltransferase domain in the interval 5-154; that stretch reads IELGDVTPHN…DAHVLQKSLR (150 aa). Tyrosine 30 provides a ligand contact to substrate. Tyrosine 72 is a catalytic residue. Methionine 74 serves as a coordination point for substrate. An acetyl-CoA-binding site is contributed by 76–89; that stretch reads LGCLAPYRRLGIGT. Residue histidine 111 is part of the active site. 116–125 lines the CoA pocket; that stretch reads NESAIDFYQK. Positions 137–140 are substrate; that stretch reads YYKR.

This sequence belongs to the acetyltransferase family. GNAT subfamily. In terms of assembly, interacts with naa35.

The protein localises to the cytoplasm. Its subcellular location is the nucleus. It catalyses the reaction N-terminal L-methionyl-L-alanyl-[protein] + acetyl-CoA = N-terminal N(alpha)-acetyl-L-methionyl-L-alanyl-[protein] + CoA + H(+). The catalysed reaction is N-terminal L-methionyl-L-seryl-[protein] + acetyl-CoA = N-terminal N(alpha)-acetyl-L-methionyl-L-seryl-[protein] + CoA + H(+). It carries out the reaction N-terminal L-methionyl-L-valyl-[protein] + acetyl-CoA = N-terminal N(alpha)-acetyl-L-methionyl-L-valyl-[protein] + CoA + H(+). The enzyme catalyses N-terminal L-methionyl-L-threonyl-[protein] + acetyl-CoA = N-terminal N(alpha)-acetyl-L-methionyl-L-threonyl-[protein] + CoA + H(+). It catalyses the reaction N-terminal L-methionyl-L-lysyl-[protein] + acetyl-CoA = N-terminal N(alpha)-acetyl-L-methionyl-L-lysyl-[protein] + CoA + H(+). The catalysed reaction is N-terminal L-methionyl-L-leucyl-[protein] + acetyl-CoA = N-terminal N(alpha)-acetyl-L-methionyl-L-leucyl-[protein] + CoA + H(+). It carries out the reaction N-terminal L-methionyl-L-phenylalanyl-[protein] + acetyl-CoA = N-terminal N(alpha)-acetyl-L-methionyl-L-phenylalanyl-[protein] + CoA + H(+). The enzyme catalyses N-terminal L-methionyl-L-tyrosyl-[protein] + acetyl-CoA = N-terminal N(alpha)-acetyl-L-methionyl-L-tyrosyl-[protein] + CoA + H(+). N-alpha-acetyltransferase that acetylates the N-terminus of proteins that retain their initiating methionine. Has a broad substrate specificity: able to acetylate the initiator methionine of most peptides, except for those with a proline in second position. Also displays N-epsilon-acetyltransferase activity by mediating acetylation of the side chain of specific lysines on proteins. The relevance of N-epsilon-acetyltransferase activity is however unclear. Required for sister chromatid cohesion during mitosis by promoting binding of CDCA5/sororin to cohesin. Essential in embryonic cell proliferation and survival. The polypeptide is N-alpha-acetyltransferase 50 (naa50) (Danio rerio (Zebrafish)).